The primary structure comprises 358 residues: Naringenin,2-oxoglutarate 3-dioxygenase (358 aa).

The region spanning Cys190–Pro294 is the Fe2OG dioxygenase domain. Residues His217, Asp219, and His275 each coordinate Fe cation. Residue Arg285 coordinates 2-oxoglutarate.

Belongs to the iron/ascorbate-dependent oxidoreductase family. Interacts with Dihydroflavonol-4-reductase (TT3), chalcone synthase (TT4) and chalcone isomerase (TT5) to form a flavonoid enzyme complex. Fe(2+) is required as a cofactor. It depends on L-ascorbate as a cofactor.

It catalyses the reaction a (2S)-flavan-4-one + 2-oxoglutarate + O2 = a (2R,3R)-dihydroflavonol + succinate + CO2. It participates in secondary metabolite biosynthesis; flavonoid biosynthesis. Functionally, catalyzes the 3-beta-hydroxylation of 2S-flavanones to 2R,3R-dihydroflavonols which are intermediates in the biosynthesis of flavonols, anthocyanidins, catechins and proanthocyanidins in plants. This Arabidopsis thaliana (Mouse-ear cress) protein is Naringenin,2-oxoglutarate 3-dioxygenase (F3H).